A 95-amino-acid polypeptide reads, in one-letter code: Alpha-conotoxin-like Cp20.4 (95 aa).

An N-terminal signal peptide occupies residues 1 to 24; the sequence is MPKLEMMLVVLLIFPLFYFDAAGG. Residues 25-45 constitute a propeptide that is removed on maturation; that stretch reads QAVQGDRRGDGLARYLQRGDR. Glu50 carries the 4-carboxyglutamate modification. Position 56 is a 4-hydroxyproline (Pro56). 4 cysteine pairs are disulfide-bonded: Cys64–Cys73, Cys69–Cys81, Cys74–Cys91, and Cys79–Cys93.

It belongs to the conotoxin D superfamily. As to quaternary structure, hetero-, homo- or pseudo-homodimer (identical sequence, different post-translational modifications). Expressed by the venom duct.

The protein resides in the secreted. Functionally, alpha-conotoxins act on postsynaptic membranes, they bind to the nicotinic acetylcholine receptors (nAChR) and thus inhibit them. Through its two C-terminal domains, this homodimeric protein would bind to two nAChR allosteric sites, located outside the nAChR C-loop of the principal binding face and at the adjacent binding interface in a clockwise direction. This toxin specifically blocks mammalian neuronal nAChR of the alpha-7/CHRNA7, alpha-3-beta-2/CHRNA3-CHRNB2 and alpha-4-beta-2/CHRNA4-CHRNB2 subtypes. The protein is Alpha-conotoxin-like Cp20.4 of Conus capitaneus (Captain cone).